Consider the following 191-residue polypeptide: FMN-dependent NADH:quinone oxidoreductase 1 (191 aa).

FMN contacts are provided by residues S10 and 16–18 (SVS).

This sequence belongs to the azoreductase type 1 family. Homodimer. It depends on FMN as a cofactor.

The enzyme catalyses 2 a quinone + NADH + H(+) = 2 a 1,4-benzosemiquinone + NAD(+). It carries out the reaction N,N-dimethyl-1,4-phenylenediamine + anthranilate + 2 NAD(+) = 2-(4-dimethylaminophenyl)diazenylbenzoate + 2 NADH + 2 H(+). Its function is as follows. Quinone reductase that provides resistance to thiol-specific stress caused by electrophilic quinones. Also exhibits azoreductase activity. Catalyzes the reductive cleavage of the azo bond in aromatic azo compounds to the corresponding amines. In Jannaschia sp. (strain CCS1), this protein is FMN-dependent NADH:quinone oxidoreductase 1.